A 319-amino-acid polypeptide reads, in one-letter code: Lipoyl synthase (319 aa).

Positions 1-24 are disordered; sequence MAVVIDTVGARPRHPEKQANPDTP. Over residues 13-24 the composition is skewed to basic and acidic residues; the sequence is RHPEKQANPDTP. Residues Cys-58, Cys-63, Cys-69, Cys-84, Cys-88, Cys-91, and Ser-298 each contribute to the [4Fe-4S] cluster site. Residues 70-287 enclose the Radical SAM core domain; sequence WDKSHATFMI…EEIARAKGFL (218 aa).

Belongs to the radical SAM superfamily. Lipoyl synthase family. Requires [4Fe-4S] cluster as cofactor.

It localises to the cytoplasm. It catalyses the reaction [[Fe-S] cluster scaffold protein carrying a second [4Fe-4S](2+) cluster] + N(6)-octanoyl-L-lysyl-[protein] + 2 oxidized [2Fe-2S]-[ferredoxin] + 2 S-adenosyl-L-methionine + 4 H(+) = [[Fe-S] cluster scaffold protein] + N(6)-[(R)-dihydrolipoyl]-L-lysyl-[protein] + 4 Fe(3+) + 2 hydrogen sulfide + 2 5'-deoxyadenosine + 2 L-methionine + 2 reduced [2Fe-2S]-[ferredoxin]. Its pathway is protein modification; protein lipoylation via endogenous pathway; protein N(6)-(lipoyl)lysine from octanoyl-[acyl-carrier-protein]: step 2/2. Functionally, catalyzes the radical-mediated insertion of two sulfur atoms into the C-6 and C-8 positions of the octanoyl moiety bound to the lipoyl domains of lipoate-dependent enzymes, thereby converting the octanoylated domains into lipoylated derivatives. This Phenylobacterium zucineum (strain HLK1) protein is Lipoyl synthase.